The chain runs to 105 residues: Anti-sigma factor RsrA (105 aa).

Residues C11, H37, C41, and C44 each contribute to the Zn(2+) site. An intrachain disulfide couples C11 to C44. Residues 33-47 (KFEHHFEECSPCLEK) are contributes to redox-sensitivity. The tract at residues 86 to 105 (QSVPEHDVAAAPSSSAPQES) is disordered. Residues 94–105 (AAAPSSSAPQES) are compositionally biased toward low complexity.

It belongs to the zinc-associated anti-sigma factor (ZAS) superfamily. As to quaternary structure, interacts with cognate sigma factor SigR under reducing but not oxiding conditions. Treatment with the thiol-oxidzing agent diamide inhibits the interaction, while incubation with thioredoxin (trxA) stimulates the interaction. Zn(2+) serves as cofactor. Under oxidizing conditions up to 3 disulfide bonds are formed. A single disulfide bond inhibits binding to SigR. Cys-11 forms a disulfide bond with either Cys-44 (the major bind) or Cys-41 (a minor bond).

A redox-regulated anti-sigma factor for extracytoplasmic function (ECF) sigma factor SigR, and a key sensor of disulfide stress. Holds SigR, its cognate ECF sigma factor, in an inactive form, inhibiting its sigma activity under reducing but not oxidizing conditions; oxidation and reduction of the anti-sigma factor is reversible. Mycothiol (MSH) is competent for reduction of RsrA, allowing it to bind to SigR. In conjunction with its cognate sigma factor SigR may sense the intracellular level of reduced MSH. Probably releases SigR during oxidative stress. In Streptomyces coelicolor (strain ATCC BAA-471 / A3(2) / M145), this protein is Anti-sigma factor RsrA (rsrA).